The sequence spans 93 residues: Aspartyl/glutamyl-tRNA(Asn/Gln) amidotransferase subunit C (93 aa).

The protein belongs to the GatC family. In terms of assembly, heterotrimer of A, B and C subunits.

The enzyme catalyses L-glutamyl-tRNA(Gln) + L-glutamine + ATP + H2O = L-glutaminyl-tRNA(Gln) + L-glutamate + ADP + phosphate + H(+). The catalysed reaction is L-aspartyl-tRNA(Asn) + L-glutamine + ATP + H2O = L-asparaginyl-tRNA(Asn) + L-glutamate + ADP + phosphate + 2 H(+). In terms of biological role, allows the formation of correctly charged Asn-tRNA(Asn) or Gln-tRNA(Gln) through the transamidation of misacylated Asp-tRNA(Asn) or Glu-tRNA(Gln) in organisms which lack either or both of asparaginyl-tRNA or glutaminyl-tRNA synthetases. The reaction takes place in the presence of glutamine and ATP through an activated phospho-Asp-tRNA(Asn) or phospho-Glu-tRNA(Gln). The protein is Aspartyl/glutamyl-tRNA(Asn/Gln) amidotransferase subunit C of Rubrobacter xylanophilus (strain DSM 9941 / JCM 11954 / NBRC 16129 / PRD-1).